Consider the following 429-residue polypeptide: Histidine--tRNA ligase (429 aa).

The protein belongs to the class-II aminoacyl-tRNA synthetase family. Homodimer.

Its subcellular location is the cytoplasm. It catalyses the reaction tRNA(His) + L-histidine + ATP = L-histidyl-tRNA(His) + AMP + diphosphate + H(+). The chain is Histidine--tRNA ligase from Pseudomonas putida (strain W619).